Reading from the N-terminus, the 345-residue chain is Anthranilate phosphoribosyltransferase (345 aa).

5-phospho-alpha-D-ribose 1-diphosphate-binding positions include Gly-84, 87-88, Thr-92, 94-97, 112-120, and Ser-124; these read GD, NIST, and KHGGRGVSS. Anthranilate is bound at residue Gly-84. Residue Ser-96 participates in Mg(2+) binding. Arg-170 lines the anthranilate pocket. The Mg(2+) site is built by Asp-229 and Glu-230.

Belongs to the anthranilate phosphoribosyltransferase family. In terms of assembly, homodimer. It depends on Mg(2+) as a cofactor.

The enzyme catalyses N-(5-phospho-beta-D-ribosyl)anthranilate + diphosphate = 5-phospho-alpha-D-ribose 1-diphosphate + anthranilate. The protein operates within amino-acid biosynthesis; L-tryptophan biosynthesis; L-tryptophan from chorismate: step 2/5. Catalyzes the transfer of the phosphoribosyl group of 5-phosphorylribose-1-pyrophosphate (PRPP) to anthranilate to yield N-(5'-phosphoribosyl)-anthranilate (PRA). The polypeptide is Anthranilate phosphoribosyltransferase (Paracidovorax citrulli (strain AAC00-1) (Acidovorax citrulli)).